Consider the following 154-residue polypeptide: MTLGLINANPVVQAKKEGLVRREDQYRDDGVDPLEIYDYVRDIRDPEHPYTLEQLRVVSEESVTVDDKLDRILITFTPTIQHCSMANIIGLCLRAKLKECLQLHYKVDIRVSPGSHADEVSVNKQLNDKERVVAALENPNLRQLVDECIYSDEI.

It belongs to the MIP18 family.

In terms of biological role, may play a role in chromosome segregation through establishment of sister chromatid cohesion. Unable to complement ae7 mutants, and thus probably not involved in the cytosolic iron-sulfur assembly (CIA) pathway. This is Protein AE7-like 1 from Arabidopsis thaliana (Mouse-ear cress).